The sequence spans 86 residues: DNA-directed RNA polymerase subunit Rpo6 (86 aa).

It belongs to the archaeal Rpo6/eukaryotic RPB6 RNA polymerase subunit family. As to quaternary structure, part of the RNA polymerase complex.

The protein resides in the cytoplasm. It carries out the reaction RNA(n) + a ribonucleoside 5'-triphosphate = RNA(n+1) + diphosphate. Its function is as follows. DNA-dependent RNA polymerase (RNAP) catalyzes the transcription of DNA into RNA using the four ribonucleoside triphosphates as substrates. This Sulfurisphaera tokodaii (strain DSM 16993 / JCM 10545 / NBRC 100140 / 7) (Sulfolobus tokodaii) protein is DNA-directed RNA polymerase subunit Rpo6.